Here is a 397-residue protein sequence, read N- to C-terminus: Tryptophan synthase beta chain (397 aa).

An N6-(pyridoxal phosphate)lysine modification is found at K88.

This sequence belongs to the TrpB family. Tetramer of two alpha and two beta chains. The cofactor is pyridoxal 5'-phosphate.

It catalyses the reaction (1S,2R)-1-C-(indol-3-yl)glycerol 3-phosphate + L-serine = D-glyceraldehyde 3-phosphate + L-tryptophan + H2O. It functions in the pathway amino-acid biosynthesis; L-tryptophan biosynthesis; L-tryptophan from chorismate: step 5/5. In terms of biological role, the beta subunit is responsible for the synthesis of L-tryptophan from indole and L-serine. The sequence is that of Tryptophan synthase beta chain from Haemophilus influenzae (strain PittEE).